A 176-amino-acid polypeptide reads, in one-letter code: Ribosome maturation factor RimM (176 aa).

Residues 100–173 enclose the PRC barrel domain; it reads KDEYHYHDLI…WLLINPPPGL (74 aa).

The protein belongs to the RimM family. As to quaternary structure, binds ribosomal protein uS19.

It localises to the cytoplasm. Functionally, an accessory protein needed during the final step in the assembly of 30S ribosomal subunit, possibly for assembly of the head region. Essential for efficient processing of 16S rRNA. May be needed both before and after RbfA during the maturation of 16S rRNA. It has affinity for free ribosomal 30S subunits but not for 70S ribosomes. The sequence is that of Ribosome maturation factor RimM from Prochlorococcus marinus (strain NATL1A).